We begin with the raw amino-acid sequence, 226 residues long: Triosephosphate isomerase (226 aa).

The Electrophile role is filled by H91. The active-site Proton acceptor is the E163. The substrate site is built by G169 and S207.

This sequence belongs to the triosephosphate isomerase family. In terms of assembly, homodimer.

The protein resides in the cytoplasm. The catalysed reaction is D-glyceraldehyde 3-phosphate = dihydroxyacetone phosphate. Its pathway is carbohydrate biosynthesis; gluconeogenesis. The protein operates within carbohydrate degradation; glycolysis; D-glyceraldehyde 3-phosphate from glycerone phosphate: step 1/1. Involved in the gluconeogenesis. Catalyzes stereospecifically the conversion of dihydroxyacetone phosphate (DHAP) to D-glyceraldehyde-3-phosphate (G3P). This Rhizobium etli (strain ATCC 51251 / DSM 11541 / JCM 21823 / NBRC 15573 / CFN 42) protein is Triosephosphate isomerase.